The primary structure comprises 296 residues: POM121-like protein 12 (296 aa).

Disordered regions lie at residues 1–54 (MGAA…SPWP) and 142–162 (APPE…RPAG). Residues 34 to 52 (SRSPSTPQTTPSPQGRQSP) show a composition bias toward low complexity.

Belongs to the POM121 family.

In Homo sapiens (Human), this protein is POM121-like protein 12 (POM121L12).